Consider the following 154-residue polypeptide: Protein phosphatase 1 regulatory subunit 27 (154 aa).

ANK repeat units follow at residues 63–92 and 96–125; these read SGLA…DIHQ and TGWT…DRDA.

Interacts with DYSF and PPP1CA.

In terms of biological role, inhibits phosphatase activity of protein phosphatase 1 (PP1) complexes. This chain is Protein phosphatase 1 regulatory subunit 27 (Ppp1r27), found in Mus musculus (Mouse).